Reading from the N-terminus, the 157-residue chain is Peptide methionine sulfoxide reductase MsrA (157 aa).

Residue Cys10 is part of the active site.

Belongs to the MsrA Met sulfoxide reductase family.

The catalysed reaction is L-methionyl-[protein] + [thioredoxin]-disulfide + H2O = L-methionyl-(S)-S-oxide-[protein] + [thioredoxin]-dithiol. It catalyses the reaction [thioredoxin]-disulfide + L-methionine + H2O = L-methionine (S)-S-oxide + [thioredoxin]-dithiol. Its function is as follows. Has an important function as a repair enzyme for proteins that have been inactivated by oxidation. Catalyzes the reversible oxidation-reduction of methionine sulfoxide in proteins to methionine. This is Peptide methionine sulfoxide reductase MsrA from Clostridium botulinum (strain Loch Maree / Type A3).